A 124-amino-acid chain; its full sequence is Small ribosomal subunit protein uS12 (124 aa).

A 3-methylthioaspartic acid modification is found at Asp89. Positions 104–124 (SAGVQNRNRGRSKYGTKRPKK) are disordered. Basic residues predominate over residues 111 to 124 (NRGRSKYGTKRPKK).

The protein belongs to the universal ribosomal protein uS12 family. As to quaternary structure, part of the 30S ribosomal subunit. Contacts proteins S8 and S17. May interact with IF1 in the 30S initiation complex.

Functionally, with S4 and S5 plays an important role in translational accuracy. Its function is as follows. Interacts with and stabilizes bases of the 16S rRNA that are involved in tRNA selection in the A site and with the mRNA backbone. Located at the interface of the 30S and 50S subunits, it traverses the body of the 30S subunit contacting proteins on the other side and probably holding the rRNA structure together. The combined cluster of proteins S8, S12 and S17 appears to hold together the shoulder and platform of the 30S subunit. In Desulforamulus reducens (strain ATCC BAA-1160 / DSM 100696 / MI-1) (Desulfotomaculum reducens), this protein is Small ribosomal subunit protein uS12.